We begin with the raw amino-acid sequence, 345 residues long: MNMTELKGALIGCGFFAVNQMHAWKDVKGAGIAAICDRDPKRLKLVGDQFGIERRYGDAAALFADGGFDFVDIATTVQSHRALVEMAAAHKVPAICQKPFAKSLSDAKAMVRTCENADIPLMVHENFRWQTPIQAVKAVLESGAIGEPFWGRFSFRSGFDVFSGQPYLAEGERFIIEDLGIHTLDIARFILGDVATLTARTKRVNPKIKGEDVATILLDHQNGATSIVDVSYATKLGTEPFPETLIDIDGTQGTIRLSQGYRLEVTGPNGMTISDASPQLLSWASRPWHNIQESVLAIQQHWTDRLSSGGETSTSGADNLKTFALVEAAYESAANGRTVDIGAML.

15–16 (FF) contacts NAD(+). Mg(2+) is bound by residues Trp24, Lys25, Val27, and Ala30. NAD(+)-binding positions include Asp37, Ser79, 97–98 (QK), Asn126, and 165–167 (QPY). Position 98 (Lys98) interacts with substrate. Gln165, Asp178, His182, and Tyr232 together coordinate substrate.

This sequence belongs to the Gfo/Idh/MocA family.

The catalysed reaction is D-apiofuranose + NAD(+) = D-apionolactone + NADH + H(+). Its pathway is carbohydrate metabolism. Functionally, involved in catabolism of D-apiose. Catalyzes oxidation of D-apiose to D-apionolactone. In Rhizobium rhizogenes (strain K84 / ATCC BAA-868) (Agrobacterium radiobacter), this protein is D-apiose dehydrogenase.